Reading from the N-terminus, the 304-residue chain is Iron(III) enterobactin esterase (304 aa).

The N-terminal stretch at 1 to 25 (MRTSLLVAALGLALAAALPGGAPLA) is a signal peptide. Catalysis depends on charge relay system residues Ser182, Glu242, and His283.

Belongs to the esterase D family. Monomer.

The protein resides in the periplasm. The catalysed reaction is Fe(III)-enterobactin + 3 H2O + H(+) = Fe(III)-[N-(2,3-dihydroxybenzoyl)-L-serine] + 2 N-(2,3-dihydroxybenzoyl)-L-serine. The enzyme catalyses Fe(III)-enterobactin + H2O = Fe(III)-[N-(2,3-dihydroxybenzoyl)-L-serine]3 + H(+). It catalyses the reaction Fe(III)-[N-(2,3-dihydroxybenzoyl)-L-serine]3 + H2O + H(+) = Fe(III)-[N-(2,3-dihydroxybenzoyl)-L-serine]2 + N-(2,3-dihydroxybenzoyl)-L-serine. It carries out the reaction Fe(III)-[N-(2,3-dihydroxybenzoyl)-L-serine]2 + H2O + H(+) = Fe(III)-[N-(2,3-dihydroxybenzoyl)-L-serine] + N-(2,3-dihydroxybenzoyl)-L-serine. Functionally, catalyzes the hydrolysis of ferric enterobactin (Fe-Ent). Hydrolyzes Fe-Ent into three molecules of 2,3-dihydroxybenzoylserine (DHBS) still complexed with ferric iron. Iron reduction is necessary to obtain complete release of the metal from DHBS. It can hydrolyze salmochelin S4 (diglucosyl-C-Ent) but is not involved in iron acquisition by this siderophore. The sequence is that of Iron(III) enterobactin esterase from Pseudomonas aeruginosa (strain ATCC 15692 / DSM 22644 / CIP 104116 / JCM 14847 / LMG 12228 / 1C / PRS 101 / PAO1).